Here is a 525-residue protein sequence, read N- to C-terminus: EGF domain-specific O-linked N-acetylglucosamine transferase (525 aa).

The N-terminal stretch at 1-24 (MVPLRLVLLLHIIHFSCENEVGSA) is a signal peptide. The Required for optimal activity signature appears at 293 to 295 (DYE). N-linked (GlcNAc...) asparagine glycosylation occurs at Asn352. The short motif at 522 to 525 (RDEL) is the Prevents secretion from ER element.

The protein belongs to the glycosyltransferase 61 family.

It localises to the endoplasmic reticulum lumen. It catalyses the reaction L-seryl-[protein] + UDP-N-acetyl-alpha-D-glucosamine = 3-O-(N-acetyl-beta-D-glucosaminyl)-L-seryl-[protein] + UDP + H(+). It carries out the reaction L-threonyl-[protein] + UDP-N-acetyl-alpha-D-glucosamine = 3-O-(N-acetyl-beta-D-glucosaminyl)-L-threonyl-[protein] + UDP + H(+). Its function is as follows. Catalyzes the transfer of a single N-acetylglucosamine from UDP-GlcNAc to a serine or threonine residue in extracellular proteins resulting in their modification with a beta-linked N-acetylglucosamine (O-GlcNAc). Specifically glycosylates the Thr residue located between the fifth and sixth conserved cysteines of folded EGF-like domains. This is EGF domain-specific O-linked N-acetylglucosamine transferase (eogt) from Xenopus laevis (African clawed frog).